A 405-amino-acid polypeptide reads, in one-letter code: Multidrug resistance protein MdtH (405 aa).

A run of 12 helical transmembrane segments spans residues 13–33 (YFLL…FPLI), 34–54 (SIRF…ALGL), 78–95 (MIIA…LMGI), 99–116 (PWLL…GTLF), 139–159 (LLMM…SWLL), 165–185 (LVCL…AWLL), 213–233 (YVLT…MLPI), 243–263 (AAVK…LYPI), 277–297 (LMAG…IEDL), 299–319 (ALFM…PARE), 340–360 (LGLA…YDVG), and 365–385 (IPQL…LGLY).

Belongs to the major facilitator superfamily. DHA1 family. MdtH (TC 2.A.1.2.21) subfamily.

It is found in the cell inner membrane. The protein is Multidrug resistance protein MdtH of Sodalis glossinidius (strain morsitans).